The following is a 1165-amino-acid chain: Phenyloxazoline synthase MbtB (1165 aa).

The Carrier 1 domain occupies 5–78; that stretch reads PARSEDIREE…AWAQLVTAGR (74 aa). Serine 39 carries the post-translational modification O-(pantetheine 4'-phosphoryl)serine. A disordered region spans residues 77-100; it reads GRQDTDSAAPPADSSGDPSGETEP. A condensation/cyclization region spans residues 97 to 393; that stretch reads ETEPFALAPM…SSLLLDVDLV (297 aa). Residues 578–973 are adenylation; sequence SYAQLRDQAL…RVPGVRTAVA (396 aa). The Carrier 2 domain maps to 1055 to 1131; it reads AASTPLEGAL…ALAAVLRAAE (77 aa). Serine 1090 bears the O-(pantetheine 4'-phosphoryl)serine mark.

The protein belongs to the ATP-dependent AMP-binding enzyme family. MbtB subfamily. Pantetheine 4'-phosphate is required as a cofactor. Post-translationally, 4'-phosphopantetheine is transferred from CoA to a specific serine in each of the two carrier protein domains, leading to their activation from apo to holo forms.

It participates in siderophore biosynthesis; mycobactin biosynthesis. Involved in the initial steps of the mycobactin biosynthetic pathway. Putatively couples activated salicylic acid with serine or threonine and cyclizes this precursor to the hydroxyphenyloxazoline ring system present in this class of siderophores. This chain is Phenyloxazoline synthase MbtB (mbtB), found in Mycolicibacterium paratuberculosis (strain ATCC BAA-968 / K-10) (Mycobacterium paratuberculosis).